Reading from the N-terminus, the 610-residue chain is MCGIVGAVAQRDITPILIEGLKRLEYRGYDSCGVALYMDGHLRRTRSTKRVAELSEQVAEDKLGGFTGIAHTRWATHGIPATYNAHPHFSAQGKDEPRIALVHNGIIENHEELRQELQGVGYVFESQTDTEVIAHLVNHLYAGDLFEAVQQAVRRLQGAYAIAVFCRDEPHRVVGARQGSPLVVGLGQNENFLASDALALAGTTDQIIYLEDGDVVDLQLARVWIVDQAGKQVERKAHTVQVHTGAAELGPYRHFMQKEIFEQPRAVGDTLQDIESITPELFGDGAYKVFKEIDSLLILACGTSYYAGLTAKYWIESIARIPVAVEIASEYRYRDSVPNPNALVVTISQSGETADTLAALKHARSLGMQHTLTVCNVATSAMVRECELAYITRAGVEIGVASTKAFTTQLTALFLLTLALAQTRGRLTEEQEAEHLKALRHLPAAIGAVLALEPQIMAWADRFASKENALFLGRGMHYPIALEGALKLKEISYIHAEAYPAGELKHGPLALVTEHMPVVTIAPKDALLEKLKSNMQEVRARGGELYVFADADSKIANAEGMHVIRMPEYYGALSPIVHTIPLQLLSYHTACVRGTDVDKPRNLAKSVTVE.

Catalysis depends on Cys-2, which acts as the Nucleophile; for GATase activity. One can recognise a Glutamine amidotransferase type-2 domain in the interval 2–221 (CGIVGAVAQR…DGDVVDLQLA (220 aa)). SIS domains are found at residues 286 to 426 (AYKV…TRGR) and 459 to 600 (WADR…VDKP). Lys-605 acts as the For Fru-6P isomerization activity in catalysis.

In terms of assembly, homodimer.

Its subcellular location is the cytoplasm. It catalyses the reaction D-fructose 6-phosphate + L-glutamine = D-glucosamine 6-phosphate + L-glutamate. Catalyzes the first step in hexosamine metabolism, converting fructose-6P into glucosamine-6P using glutamine as a nitrogen source. This is Glutamine--fructose-6-phosphate aminotransferase [isomerizing] from Bordetella bronchiseptica (strain ATCC BAA-588 / NCTC 13252 / RB50) (Alcaligenes bronchisepticus).